Consider the following 237-residue polypeptide: Fluoroquinolones export permease protein MT2761 (237 aa).

Transmembrane regions (helical) follow at residues 20-40 (FLHA…PMPV), 49-69 (YVLV…TVFF), 96-116 (VLLA…HGLG), 119-139 (LLPL…VGFS), 147-167 (VTDW…PPVV), and 199-219 (LAPW…AGLC).

In terms of assembly, the complex is composed of 2 ATP-binding proteins and 2 transmembrane proteins.

It is found in the cell membrane. Its function is as follows. Part of the ABC transporter complex involved in fluoroquinolones export. Probably responsible for the translocation of the substrate across the membrane. This chain is Fluoroquinolones export permease protein MT2761, found in Mycobacterium tuberculosis (strain CDC 1551 / Oshkosh).